The following is a 316-amino-acid chain: Metal tolerance protein 8 (316 aa).

The Cytoplasmic portion of the chain corresponds to 1–15 (MGPVRHILNERKSRK). A helical membrane pass occupies residues 16 to 36 (IAAFLLINTAYMFVEFTSGFM). At 37–45 (SDSLGLISD) the chain is on the vacuolar side. Residues 46-66 (ACHMLFDCAALAIGLYASYIA) traverse the membrane as a helical segment. At 67–80 (RLPANGLYNYGRGR) the chain is on the cytoplasmic side. A helical transmembrane segment spans residues 81-101 (FEVLSGYVNAVFLVLVGALIV). Topologically, residues 102–116 (LESFERILEPREIST) are vacuolar. The helical transmembrane segment at 117–137 (SSLLTVSIGGLVVNVIGLVFF) threads the bilayer. Residues 138 to 176 (HEEHHHAHGEAHSCNGGLQSSENHNKSRNRHHIDHNMEG) lie on the Cytoplasmic side of the membrane. A disordered region spans residues 147-166 (EAHSCNGGLQSSENHNKSRN). Residues 177 to 197 (IFLHVLADTMGSVGVVISTLL) traverse the membrane as a helical segment. Topologically, residues 198 to 202 (IKYKG) are vacuolar. The helical transmembrane segment at 203-223 (WLIADPICSVFISIMIVSSVL) threads the bilayer. Topologically, residues 224-316 (PLLRNSAEIL…LTIQIECVKR (93 aa)) are cytoplasmic.

It belongs to the cation diffusion facilitator (CDF) transporter (TC 2.A.4) family. SLC30A subfamily.

It is found in the vacuole membrane. Involved in sequestration of excess metal in the cytoplasm into vacuoles to maintain metal homeostasis. This chain is Metal tolerance protein 8 (MTP8), found in Oryza sativa subsp. japonica (Rice).